The chain runs to 86 residues: Large ribosomal subunit protein bL31B (86 aa).

The protein belongs to the bacterial ribosomal protein bL31 family. Type B subfamily. In terms of assembly, part of the 50S ribosomal subunit.

This Erwinia tasmaniensis (strain DSM 17950 / CFBP 7177 / CIP 109463 / NCPPB 4357 / Et1/99) protein is Large ribosomal subunit protein bL31B.